Reading from the N-terminus, the 850-residue chain is Trimethylguanosine synthase (850 aa).

The tract at residues 54–85 (NNAGDRVTEEEEDDHSSGTTESHSADEGDLDP) is disordered. Thr61 is subject to Phosphothreonine. Phosphoserine is present on residues Ser92 and Ser152. Disordered stretches follow at residues 278 to 311 (DQNA…DNDH), 327 to 454 (EVEQ…GGIP), and 523 to 566 (ISQE…PENC). Positions 363 to 374 (TPKESDISENRS) are enriched in basic and acidic residues. Residues 375 to 390 (SDQPAQELQESSGTNT) are compositionally biased toward polar residues. 2 positions are modified to phosphoserine: Ser405 and Ser431. Over residues 424–435 (DIDENPDSEVDD) the composition is skewed to acidic residues. Over residues 548–562 (SMEKTDGLMETRDPE) the composition is skewed to basic and acidic residues. Position 571 is a phosphoserine (Ser571). The disordered stretch occupies residues 595 to 628 (TEGVANSPRAEAEVEIKKKKKKKKKNKNKKINGL). A compositionally biased stretch (basic residues) spans 611–624 (KKKKKKKKKNKNKK). Asp713 is an S-adenosyl-L-methionine binding site.

Belongs to the methyltransferase superfamily. Trimethylguanosine synthase family. In terms of assembly, may form homooligomers. Interacts with CREBBP/CBP, EED/WAIT1, EP300/P300, NCOA6/PRIP, PPARBP/PBP and SMN. As to expression, a 55 kDa isoform is widely expressed while a 90 kDa isoform is detected exclusively in brain and testis (at protein level).

Its subcellular location is the cytoplasm. The protein localises to the nucleus. It localises to the cajal body. The protein resides in the nucleolus. It carries out the reaction a 5'-end (N(7)-methyl 5'-triphosphoguanosine)-ribonucleoside in snRNA + S-adenosyl-L-methionine = a 5'-end (N(2),N(7)-dimethyl 5'-triphosphoguanosine)-ribonucleoside in snRNA + S-adenosyl-L-homocysteine + H(+). The catalysed reaction is a 5'-end (N(7)-methyl 5'-triphosphoguanosine)-ribonucleoside in snoRNA + S-adenosyl-L-methionine = a 5'-end (N(2),N(7)-dimethyl 5'-triphosphoguanosine)-ribonucleoside in snoRNA + S-adenosyl-L-homocysteine + H(+). The enzyme catalyses a 5'-end (N(2),N(7)-dimethyl 5'-triphosphoguanosine)-ribonucleoside in snRNA + S-adenosyl-L-methionine = a 5'-end (N(2),N(2),N(7)-trimethyl 5'-triphosphoguanosine)-ribonucleoside in snRNA + S-adenosyl-L-homocysteine + H(+). It catalyses the reaction a 5'-end (N(2),N(7)-dimethyl 5'-triphosphoguanosine)-ribonucleoside in snoRNA + S-adenosyl-L-methionine = a 5'-end (N(2),N(2),N(7)-trimethyl 5'-triphosphoguanosine)-ribonucleoside in snoRNA + S-adenosyl-L-homocysteine + H(+). Functionally, catalyzes the 2 serial methylation steps for the conversion of the 7-monomethylguanosine (m(7)G) caps of snRNAs and snoRNAs to a 2,2,7-trimethylguanosine (m(2,2,7)G) cap structure. The enzyme is specific for guanine, and N7 methylation must precede N2 methylation. Hypermethylation of the m7G cap of U snRNAs leads to their concentration in nuclear foci, their colocalization with coilin and the formation of canonical Cajal bodies (CBs). Plays a role in transcriptional regulation. The sequence is that of Trimethylguanosine synthase from Rattus norvegicus (Rat).